We begin with the raw amino-acid sequence, 377 residues long: Probable purine permease 22 (377 aa).

10 consecutive transmembrane segments (helical) span residues 39–59 (WLRVSIYAIFVIFCQPLATVL), 71–91 (TYVVTLLQLIGFPVLILFRFF), 107–127 (SPSFTTLASVYLCTGLLVSAY), 128–148 (AYLSAVGLLYLPVSTFSLILA), 166–186 (FTPLIVNSLFLLTVSSALLVV), 202–222 (VIGFICTIGASAGIGLVLSLI), 238–258 (VLDLANYQSLVATCVVLIGLF), 283–303 (TLASAAIFWQVYTVGCVGLIF), 309–329 (FSNSITAVGLPIVPVVAVIVF), and 338–358 (IFSIILAIWGFLSFVYQHYLD).

The protein belongs to the purine permeases (TC 2.A.7.14) family.

It is found in the membrane. The polypeptide is Probable purine permease 22 (PUP22) (Arabidopsis thaliana (Mouse-ear cress)).